A 471-amino-acid chain; its full sequence is Cysteine--tRNA ligase (471 aa).

Cys-29 contributes to the Zn(2+) binding site. The 'HIGH' region motif lies at 31–41 (PTVYNYIHIGN). Cys-209, His-234, and Glu-238 together coordinate Zn(2+). The 'KMSKS' region motif lies at 266-270 (KMSKS). Lys-269 is a binding site for ATP.

This sequence belongs to the class-I aminoacyl-tRNA synthetase family. Monomer. The cofactor is Zn(2+).

It is found in the cytoplasm. It carries out the reaction tRNA(Cys) + L-cysteine + ATP = L-cysteinyl-tRNA(Cys) + AMP + diphosphate. The chain is Cysteine--tRNA ligase from Listeria welshimeri serovar 6b (strain ATCC 35897 / DSM 20650 / CCUG 15529 / CIP 8149 / NCTC 11857 / SLCC 5334 / V8).